The sequence spans 1316 residues: DNA-directed RNA polymerase subunit beta' (1316 aa).

Cys-60, Cys-62, Cys-75, and Cys-78 together coordinate Zn(2+). Positions 535, 537, and 539 each coordinate Mg(2+). Residues Cys-891, Cys-968, Cys-975, and Cys-978 each coordinate Zn(2+).

It belongs to the RNA polymerase beta' chain family. The RNAP catalytic core consists of 2 alpha, 1 beta, 1 beta' and 1 omega subunit. When a sigma factor is associated with the core the holoenzyme is formed, which can initiate transcription. It depends on Mg(2+) as a cofactor. Requires Zn(2+) as cofactor.

It catalyses the reaction RNA(n) + a ribonucleoside 5'-triphosphate = RNA(n+1) + diphosphate. In terms of biological role, DNA-dependent RNA polymerase catalyzes the transcription of DNA into RNA using the four ribonucleoside triphosphates as substrates. The protein is DNA-directed RNA polymerase subunit beta' of Mycobacterium bovis (strain BCG / Tokyo 172 / ATCC 35737 / TMC 1019).